A 212-amino-acid chain; its full sequence is Phosphatidylserine decarboxylase proenzyme (212 aa).

The Schiff-base intermediate with substrate; via pyruvic acid role is filled by Ser182. At Ser182 the chain carries Pyruvic acid (Ser); by autocatalysis.

It belongs to the phosphatidylserine decarboxylase family. PSD-A subfamily. In terms of assembly, heterodimer of a large membrane-associated beta subunit and a small pyruvoyl-containing alpha subunit. Pyruvate serves as cofactor. Post-translationally, is synthesized initially as an inactive proenzyme. Formation of the active enzyme involves a self-maturation process in which the active site pyruvoyl group is generated from an internal serine residue via an autocatalytic post-translational modification. Two non-identical subunits are generated from the proenzyme in this reaction, and the pyruvate is formed at the N-terminus of the alpha chain, which is derived from the carboxyl end of the proenzyme. The post-translation cleavage follows an unusual pathway, termed non-hydrolytic serinolysis, in which the side chain hydroxyl group of the serine supplies its oxygen atom to form the C-terminus of the beta chain, while the remainder of the serine residue undergoes an oxidative deamination to produce ammonia and the pyruvoyl prosthetic group on the alpha chain.

Its subcellular location is the cell membrane. It carries out the reaction a 1,2-diacyl-sn-glycero-3-phospho-L-serine + H(+) = a 1,2-diacyl-sn-glycero-3-phosphoethanolamine + CO2. It participates in phospholipid metabolism; phosphatidylethanolamine biosynthesis; phosphatidylethanolamine from CDP-diacylglycerol: step 2/2. Functionally, catalyzes the formation of phosphatidylethanolamine (PtdEtn) from phosphatidylserine (PtdSer). The protein is Phosphatidylserine decarboxylase proenzyme of Pelodictyon phaeoclathratiforme (strain DSM 5477 / BU-1).